We begin with the raw amino-acid sequence, 61 residues long: Defensin BmKDfsin2 (61 aa).

Positions 1 to 24 are cleaved as a signal peptide; it reads METIVLLFLLALVFCTLEMGMVEA. 3 disulfides stabilise this stretch: Cys28–Cys49, Cys35–Cys57, and Cys39–Cys59.

The protein belongs to the invertebrate defensin family. Type 2 subfamily. In terms of tissue distribution, highly expressed in non-venom gland (hemolymph) and moderately expressed in venom gland.

Its subcellular location is the secreted. Its function is as follows. Antibacterial peptide active against Gram-positive bacteria, but not on Gram-negative bacteria. Also has weak blocking activity on Kv1.1/KCNA1, Kv1.2/KCNA2, Kv1.3/KCNA3, KCa3.1/KCNN4/IK, KCa2.3/KCNN3/SK3 and Kv11.1/KCNH2/ERG1 channels (tested at 1 uM). It inhibits potassium channel current by interacting with the pore region. The polypeptide is Defensin BmKDfsin2 (Olivierus martensii (Manchurian scorpion)).